The sequence spans 340 residues: Dihydroorotase (340 aa).

Residues His-14 and His-16 each contribute to the Zn(2+) site. Residues 16 to 18 (HLR) and Asn-42 contribute to the substrate site. Zn(2+) is bound by residues Lys-100, His-137, and His-175. Lys-100 is modified (N6-carboxylysine). His-137 contributes to the substrate binding site. Position 220 (Leu-220) interacts with substrate. Asp-248 contributes to the Zn(2+) binding site. Asp-248 is an active-site residue. The substrate site is built by His-252 and Ala-264.

Belongs to the metallo-dependent hydrolases superfamily. DHOase family. Class II DHOase subfamily. In terms of assembly, homodimer. Zn(2+) serves as cofactor.

It carries out the reaction (S)-dihydroorotate + H2O = N-carbamoyl-L-aspartate + H(+). It functions in the pathway pyrimidine metabolism; UMP biosynthesis via de novo pathway; (S)-dihydroorotate from bicarbonate: step 3/3. Catalyzes the reversible cyclization of carbamoyl aspartate to dihydroorotate. The chain is Dihydroorotase from Sphingopyxis alaskensis (strain DSM 13593 / LMG 18877 / RB2256) (Sphingomonas alaskensis).